A 179-amino-acid chain; its full sequence is Large ribosomal subunit protein uL5 (179 aa).

This sequence belongs to the universal ribosomal protein uL5 family. Part of the 50S ribosomal subunit; part of the 5S rRNA/L5/L18/L25 subcomplex. Contacts the 5S rRNA and the P site tRNA. Forms a bridge to the 30S subunit in the 70S ribosome.

Functionally, this is one of the proteins that bind and probably mediate the attachment of the 5S RNA into the large ribosomal subunit, where it forms part of the central protuberance. In the 70S ribosome it contacts protein S13 of the 30S subunit (bridge B1b), connecting the 2 subunits; this bridge is implicated in subunit movement. Contacts the P site tRNA; the 5S rRNA and some of its associated proteins might help stabilize positioning of ribosome-bound tRNAs. The polypeptide is Large ribosomal subunit protein uL5 (Bacillus mycoides (strain KBAB4) (Bacillus weihenstephanensis)).